Here is a 398-residue protein sequence, read N- to C-terminus: MTCQPVMDCPVTLVIKAPNQKYDDQTINCFLDWTVEKLKSHLSKVYPSKPSAKDQRLVYSGKLLLDHLLLKDVLRKQDEYHMVHLVCASRTPPSSPKASKSSKSMGTSSSGRSSSSGSANPGSTSQDTSSTYPDPRPGESIRHRHTPLMYNNLVHSHPYSYLRQEYALNPPPGQEAPSIFPAYSAFTPLQMMWWQQLYARQYYIYSQATASNQSTSNGENAQPVPRPVTNSENPPPNPPRAPPNVAPEINPNIQMNAQGGPVMNEEDINRDWLDWIYTVSRAAILLSIVYFYSSFSRFVMVMGALILVYMHQAGWFPLLQDEGQQHPGDNAAEVNPDLVNNNDPQELERRMDDGLQEVHNNDAGVNVVARQGVLASAWSFITTFFTSLIPEGPPQGVN.

Residues 11–90 (VTLVIKAPNQ…HMVHLVCASR (80 aa)) form the Ubiquitin-like domain. 2 disordered regions span residues 90 to 143 (RTPP…SIRH) and 212 to 247 (NQST…NVAP). Positions 96–125 (PKASKSSKSMGTSSSGRSSSSGSANPGSTS) are enriched in low complexity. The segment covering 233–245 (NPPPNPPRAPPNV) has biased composition (pro residues). Residues 298–318 (FVMVMGALILVYMHQAGWFPL) form a helical membrane-spanning segment.

Its subcellular location is the membrane. In terms of biological role, could be involved in the unfolded protein response (UPR) pathway. In Xenopus laevis (African clawed frog), this protein is Homocysteine-responsive endoplasmic reticulum-resident ubiquitin-like domain member 2 protein (herpud2).